Reading from the N-terminus, the 234-residue chain is Leucyl/phenylalanyl-tRNA--protein transferase (234 aa).

It belongs to the L/F-transferase family.

It localises to the cytoplasm. It carries out the reaction N-terminal L-lysyl-[protein] + L-leucyl-tRNA(Leu) = N-terminal L-leucyl-L-lysyl-[protein] + tRNA(Leu) + H(+). The enzyme catalyses N-terminal L-arginyl-[protein] + L-leucyl-tRNA(Leu) = N-terminal L-leucyl-L-arginyl-[protein] + tRNA(Leu) + H(+). It catalyses the reaction L-phenylalanyl-tRNA(Phe) + an N-terminal L-alpha-aminoacyl-[protein] = an N-terminal L-phenylalanyl-L-alpha-aminoacyl-[protein] + tRNA(Phe). In terms of biological role, functions in the N-end rule pathway of protein degradation where it conjugates Leu, Phe and, less efficiently, Met from aminoacyl-tRNAs to the N-termini of proteins containing an N-terminal arginine or lysine. The polypeptide is Leucyl/phenylalanyl-tRNA--protein transferase (Citrobacter koseri (strain ATCC BAA-895 / CDC 4225-83 / SGSC4696)).